The following is a 362-amino-acid chain: Peptide chain release factor 1 (362 aa).

Residue Gln-238 is modified to N5-methylglutamine.

It belongs to the prokaryotic/mitochondrial release factor family. Post-translationally, methylated by PrmC. Methylation increases the termination efficiency of RF1.

The protein localises to the cytoplasm. In terms of biological role, peptide chain release factor 1 directs the termination of translation in response to the peptide chain termination codons UAG and UAA. The protein is Peptide chain release factor 1 of Psychrobacter cryohalolentis (strain ATCC BAA-1226 / DSM 17306 / VKM B-2378 / K5).